Consider the following 367-residue polypeptide: Porin Omp2a (367 aa).

A signal peptide spans 1–22 (MNIKSLLLGSAAALVAASGAQA).

Belongs to the alphaproteobacteria porin family. As to quaternary structure, monomer.

It localises to the cell outer membrane. In terms of biological role, forms passive diffusion pores that allow small molecular weight hydrophilic materials across the outer membrane. The polypeptide is Porin Omp2a (omp2a) (Brucella suis).